A 214-amino-acid polypeptide reads, in one-letter code: Lazarillo protein (214 aa).

Residues 1 to 21 (MIRRGLLSVTAALVLLSVSCS) form the signal peptide. 7 N-linked (GlcNAc...) asparagine glycosylation sites follow: Asn-38, Asn-74, Asn-84, Asn-90, Asn-130, Asn-158, and Asn-161. A lipid anchor (GPI-anchor amidated alanine) is attached at Ala-192. Residues 193–214 (GAEHVVGAMLSVAIASLFALLH) constitute a propeptide, removed in mature form.

It belongs to the calycin superfamily. Lipocalin family. Post-translationally, N-glycosylated. Contains disulfide bonds. In terms of tissue distribution, expressed by a subset of neuroblasts, ganglion mother cells and neurons of the CNS; by all sensory neurons of the PNS.

Its subcellular location is the cell membrane. Putative role in axonal outgrowth and guidance, required for the navigation of identified commissural neurons. Could be a receptor the midline morphogen. This Schistocerca americana (American grasshopper) protein is Lazarillo protein.